We begin with the raw amino-acid sequence, 217 residues long: N-(5'-phosphoribosyl)anthranilate isomerase (217 aa).

Belongs to the TrpF family.

The catalysed reaction is N-(5-phospho-beta-D-ribosyl)anthranilate = 1-(2-carboxyphenylamino)-1-deoxy-D-ribulose 5-phosphate. Its pathway is amino-acid biosynthesis; L-tryptophan biosynthesis; L-tryptophan from chorismate: step 3/5. This chain is N-(5'-phosphoribosyl)anthranilate isomerase, found in Synechococcus elongatus (strain ATCC 33912 / PCC 7942 / FACHB-805) (Anacystis nidulans R2).